The sequence spans 598 residues: MATAASTSAAAVAAASRLLVRRAPPRLLRRLPRAALAASRPSPPSSSSYGAAAVALGRQPLGHRARMGHTAAAAAAAGPALGLTKPNAVEPPQVSFAAKDVEFSEWKGDILAIAVTENDLVKGSDSKFENAVLKKLDGQLGGLLSEASAEEDFTGKAGQSVVLRLPGQGFKRVGLIGLGQNAPSTTTACKGIGESVASVAKSAQASSAAIVFASVGGIQEDFKLTAAAAIASGTVLGLHEDSRYKSESKKVHLKQVDLIGFGSGPEVDQKLKYANDLSSGVIFGKELVNSPANVLTPAVLAEEASNIASTYSDVFTATILDVEKCKELKMGSYLGVAAASANPPHFIHLCYKPPGGNAKRKLAIVGKGLTFDSGGYNIKTGPGCSIELMKFDMGGSAAVFGAAKALGQIKPPGVEVHFIVAACENMISGTGMRPGDIVTASNGKTIEVNNTDAEGRLTLADALVYACNQGVDKIIDLATLTGACVVALGPSIAGIFTPSDELAKEVAAASEISGEKFWRMPLEESYWESMKSGVADMVNTGGRQGGSITAALFLKQFVDEKVQWMHIDMAGPVWNDKKRAATGFGVSTLVEWVLKNSS.

The N-terminal 71 residues, 1–71 (MATAASTSAA…GHRARMGHTA (71 aa)), are a transit peptide targeting the chloroplast. Positions 367 and 372 each coordinate Mn(2+). Lys-379 is a catalytic residue. 3 residues coordinate Mn(2+): Asp-392, Asp-452, and Glu-454. Residue Arg-456 is part of the active site.

The protein belongs to the peptidase M17 family. In terms of assembly, homohexamer (dimer of homotrimers). Mn(2+) is required as a cofactor.

It localises to the plastid. The protein localises to the chloroplast. It catalyses the reaction Release of an N-terminal amino acid, Xaa-|-Yaa-, in which Xaa is preferably Leu, but may be other amino acids including Pro although not Arg or Lys, and Yaa may be Pro. Amino acid amides and methyl esters are also readily hydrolyzed, but rates on arylamides are exceedingly low.. The catalysed reaction is Release of N-terminal proline from a peptide.. Presumably involved in the processing and regular turnover of intracellular proteins. Catalyzes the removal of unsubstituted N-terminal amino acids from various peptides. In Oryza sativa subsp. japonica (Rice), this protein is Leucine aminopeptidase 2, chloroplastic.